Here is a 334-residue protein sequence, read N- to C-terminus: Glycerol-3-phosphate dehydrogenase [NAD(P)+] (334 aa).

NADPH is bound by residues Trp13, Arg33, and Lys106. Residues Lys106, Gly137, and Ser139 each coordinate sn-glycerol 3-phosphate. NADPH is bound at residue Ala141. Sn-glycerol 3-phosphate-binding residues include Lys192, Asp245, Ser255, Arg256, and Asn257. The active-site Proton acceptor is the Lys192. Residue Arg256 participates in NADPH binding. Residues Val280 and Glu282 each coordinate NADPH.

It belongs to the NAD-dependent glycerol-3-phosphate dehydrogenase family.

It localises to the cytoplasm. It catalyses the reaction sn-glycerol 3-phosphate + NAD(+) = dihydroxyacetone phosphate + NADH + H(+). The enzyme catalyses sn-glycerol 3-phosphate + NADP(+) = dihydroxyacetone phosphate + NADPH + H(+). It functions in the pathway membrane lipid metabolism; glycerophospholipid metabolism. Functionally, catalyzes the reduction of the glycolytic intermediate dihydroxyacetone phosphate (DHAP) to sn-glycerol 3-phosphate (G3P), the key precursor for phospholipid synthesis. In Chlamydia muridarum (strain MoPn / Nigg), this protein is Glycerol-3-phosphate dehydrogenase [NAD(P)+].